The sequence spans 218 residues: Glutathione S-transferase class-mu 26 kDa isozyme 51 (218 aa).

Positions 2-83 (PAKLGYWKIR…YIADKHGMLG (82 aa)) constitute a GST N-terminal domain. Glutathione-binding positions include 7–8 (YW), 41–45 (WFGDK), 54–55 (NL), and 67–68 (QS). Residues 85 to 203 (TPEERARISM…ESEKFIKWPL (119 aa)) form the GST C-terminal domain. Tyrosine 111 contributes to the substrate binding site.

Belongs to the GST superfamily. Mu family. Homodimer.

It is found in the cytoplasm. It catalyses the reaction RX + glutathione = an S-substituted glutathione + a halide anion + H(+). Conjugation of reduced glutathione to a wide number of exogenous and endogenous hydrophobic electrophiles. In terms of biological role, GST isoenzymes appear to play a central role in the parasite detoxification system. Other functions are also suspected including a role in increasing the solubility of haematin in the parasite gut. This Fasciola hepatica (Liver fluke) protein is Glutathione S-transferase class-mu 26 kDa isozyme 51.